An 809-amino-acid polypeptide reads, in one-letter code: Lon protease (809 aa).

The Lon N-terminal domain maps to 42–242; it reads LVIYPLGGRP…KVLTLLKKEL (201 aa). 395-402 is a binding site for ATP; that stretch reads GPPGVGKT. The region spanning 629–809 is the Lon proteolytic domain; sequence LTGVGIVTGL…YAEVAKLVFG (181 aa). Residues Ser716 and Lys759 contribute to the active site.

This sequence belongs to the peptidase S16 family. Homohexamer. Organized in a ring with a central cavity.

It localises to the cytoplasm. It carries out the reaction Hydrolysis of proteins in presence of ATP.. Functionally, ATP-dependent serine protease that mediates the selective degradation of mutant and abnormal proteins as well as certain short-lived regulatory proteins. Required for cellular homeostasis and for survival from DNA damage and developmental changes induced by stress. Degrades polypeptides processively to yield small peptide fragments that are 5 to 10 amino acids long. Binds to DNA in a double-stranded, site-specific manner. The polypeptide is Lon protease (Magnetococcus marinus (strain ATCC BAA-1437 / JCM 17883 / MC-1)).